A 388-amino-acid chain; its full sequence is Succinate--CoA ligase [ADP-forming] subunit beta (388 aa).

The ATP-grasp domain occupies 9–244 (KQIFAQYGLP…PSQEDAREAA (236 aa)). ATP contacts are provided by residues lysine 46, 53–55 (GRG), glutamate 99, alanine 102, and glutamate 107. Positions 199 and 213 each coordinate Mg(2+). Substrate contacts are provided by residues asparagine 264 and 321–323 (GIV).

This sequence belongs to the succinate/malate CoA ligase beta subunit family. Heterotetramer of two alpha and two beta subunits. Requires Mg(2+) as cofactor.

It catalyses the reaction succinate + ATP + CoA = succinyl-CoA + ADP + phosphate. The catalysed reaction is GTP + succinate + CoA = succinyl-CoA + GDP + phosphate. The protein operates within carbohydrate metabolism; tricarboxylic acid cycle; succinate from succinyl-CoA (ligase route): step 1/1. Its function is as follows. Succinyl-CoA synthetase functions in the citric acid cycle (TCA), coupling the hydrolysis of succinyl-CoA to the synthesis of either ATP or GTP and thus represents the only step of substrate-level phosphorylation in the TCA. The beta subunit provides nucleotide specificity of the enzyme and binds the substrate succinate, while the binding sites for coenzyme A and phosphate are found in the alpha subunit. This Mannheimia succiniciproducens (strain KCTC 0769BP / MBEL55E) protein is Succinate--CoA ligase [ADP-forming] subunit beta.